The primary structure comprises 1465 residues: DNA polymerase III PolC-type (1465 aa).

The region spanning Y425–L581 is the Exonuclease domain.

Belongs to the DNA polymerase type-C family. PolC subfamily.

The protein localises to the cytoplasm. The catalysed reaction is DNA(n) + a 2'-deoxyribonucleoside 5'-triphosphate = DNA(n+1) + diphosphate. Its function is as follows. Required for replicative DNA synthesis. This DNA polymerase also exhibits 3' to 5' exonuclease activity. In Streptococcus mutans serotype c (strain ATCC 700610 / UA159), this protein is DNA polymerase III PolC-type.